The chain runs to 254 residues: Fluoride-specific ion channel FluC 1 (254 aa).

Transmembrane regions (helical) follow at residues Leu19–Tyr39, Ile51–Val71, and Ala80–Leu100. 2 residues coordinate Na(+): Gly58 and Ser61.

The protein belongs to the fluoride channel Fluc/FEX (TC 1.A.43) family.

Its subcellular location is the cell inner membrane. It carries out the reaction fluoride(in) = fluoride(out). Na(+) is not transported, but it plays an essential structural role and its presence is essential for fluoride channel function. Its function is as follows. Fluoride-specific ion channel. Important for reducing fluoride concentration in the cell, thus reducing its toxicity. The sequence is that of Fluoride-specific ion channel FluC 1 from Brucella suis biovar 1 (strain 1330).